We begin with the raw amino-acid sequence, 303 residues long: Large ribosomal subunit protein uL18 (303 aa).

This sequence belongs to the universal ribosomal protein uL18 family. In terms of assembly, component of the large ribosomal subunit (LSU).

Its subcellular location is the cytoplasm. It localises to the nucleus. Component of the ribosome, a large ribonucleoprotein complex responsible for the synthesis of proteins in the cell. The small ribosomal subunit (SSU) binds messenger RNAs (mRNAs) and translates the encoded message by selecting cognate aminoacyl-transfer RNA (tRNA) molecules. The large subunit (LSU) contains the ribosomal catalytic site termed the peptidyl transferase center (PTC), which catalyzes the formation of peptide bonds, thereby polymerizing the amino acids delivered by tRNAs into a polypeptide chain. The nascent polypeptides leave the ribosome through a tunnel in the LSU and interact with protein factors that function in enzymatic processing, targeting, and the membrane insertion of nascent chains at the exit of the ribosomal tunnel. In Oikopleura dioica (Tunicate), this protein is Large ribosomal subunit protein uL18 (RPL5).